A 1643-amino-acid chain; its full sequence is Neurexin-3 (1643 aa).

An N-terminal signal peptide occupies residues 1–27; sequence MSSTLHSVFFTLKVSILLGSLLGLCLG. The Laminin G-like 1 domain occupies 28–202; the sequence is LEFMGLPNQW…GVQMDAEGPC (175 aa). Residues 28–1568 are Extracellular-facing; the sequence is LEFMGLPNQW…EVIRESSSTT (1541 aa). 2 N-linked (GlcNAc...) asparagine glycosylation sites follow: Asn58 and Asn105. The region spanning 198–235 is the EGF-like 1 domain; the sequence is AEGPCGERPCENGGICFLLDGHPTCDCSTTGYGGKLCS. Intrachain disulfides connect Cys202/Cys213, Cys207/Cys222, and Cys224/Cys234. Laminin G-like domains are found at residues 258–440 and 447–639; these read VATF…VFKC and DPIN…KSSC. Asp304, Leu321, and Met374 together coordinate Ca(2+). Disulfide bonds link Cys404-Cys440, Cys610-Cys639, Cys647-Cys658, Cys652-Cys667, and Cys669-Cys679. Residues 643–680 form the EGF-like 2 domain; sequence SAKQCDSYPCKNNAVCKDGWNRFICDCTGTGYWGRTCE. 2 Laminin G-like domains span residues 685–857 and 871–1046; these read ILSY…IDYC and DPVT…ERGC. Positions 732 and 749 each coordinate Ca(2+). N-linked (GlcNAc...) asparagine glycosylation occurs at Asn757. Position 807 (Arg807) interacts with Ca(2+). Disulfide bonds link Cys1018-Cys1046, Cys1053-Cys1064, Cys1058-Cys1073, and Cys1075-Cys1085. The region spanning 1049–1086 is the EGF-like 3 domain; sequence PSTTCQEDSCANQGVCMQQWEGFTCDCSMTSYSGNQCN. One can recognise a Laminin G-like 6 domain in the interval 1090-1260; that stretch reads ATYIFGKSGG…NPNIKINGSV (171 aa). 2 residues coordinate Ca(2+): Asp1142 and Ile1159. The N-linked (GlcNAc...) asparagine glycan is linked to Asn1189. Ca(2+) is bound by residues Ile1211 and Asn1213. Asn1257 and Asn1301 each carry an N-linked (GlcNAc...) asparagine glycan. Residues 1294–1318 are disordered; sequence ATTTTRKNRSTASIQPTSDDLVSSA. Residues 1303-1318 are compositionally biased toward polar residues; that stretch reads STASIQPTSDDLVSSA. Ser1317 carries O-linked (Xyl...) (heparan sulfate) serine glycosylation. A helical membrane pass occupies residues 1569–1589; the sequence is GMVVGIVAAAALCILILLYAM. Residues 1590-1643 are Cytoplasmic-facing; the sequence is YKYRNRDEGSYQVDETRNYISNSAQSNGTLMKEKQQSSKSGHKKQKNKDREYYV. Residues 1611–1643 are disordered; sequence NSAQSNGTLMKEKQQSSKSGHKKQKNKDREYYV.

Belongs to the neurexin family. The laminin G-like domain 2 binds to NXPH1. Specific isoforms bind to alpha-dystroglycan. The cytoplasmic C-terminal region binds to CASK. Specific isoforms bind neuroligins NLGN1, NLGN2 and NLGN3. Interacts with CLSTN3. Post-translationally, O-glycosylated; contains heparan sulfate. Heparan sulfate attachment is required for synapse development by mediating interactions with neuroligins. Expressed in the blood vessel walls (at protein level). Highly expressed in brain, lung, and pancreas; a lower level of expression is detectable in heart, placenta, liver, and kidney, whereas no expression can be observed in skeletal muscle. Isoform 4a is heart-specific.

Its subcellular location is the presynaptic cell membrane. Neuronal cell surface protein that may be involved in cell recognition and cell adhesion. May mediate intracellular signaling. The chain is Neurexin-3 (NRXN3) from Homo sapiens (Human).